The primary structure comprises 96 residues: MNELIEIEVVYGRPDKQVLLSLSVPVGSTLEDCIKLSGITTHFPEIIPSEAMVGIFSRADKLSSIVKAGDRIEIYRPLTADPKEMRKLRAAKMSKK.

The protein belongs to the UPF0125 (RnfH) family.

This chain is Protein RnfH, found in Psychromonas ingrahamii (strain DSM 17664 / CCUG 51855 / 37).